A 441-amino-acid polypeptide reads, in one-letter code: tRNA (adenine(37)-N6)-methyltransferase (441 aa).

Positions T30–N168 constitute a TsaA-like domain. Residues P47–Q49, H90–K91, R117, L127, and I148–T151 contribute to the S-adenosyl-L-methionine site. The segment covering Q179 to D192 has biased composition (polar residues). 2 disordered regions span residues Q179–Y231 and S264–G284.

Belongs to the tRNA methyltransferase O family.

The catalysed reaction is N(6)-L-threonylcarbamoyladenosine(37) in tRNA + S-adenosyl-L-methionine = N(6)-methyl,N(6)-L-threonylcarbamoyladenosine(37) in tRNA + S-adenosyl-L-homocysteine + H(+). Its function is as follows. S-adenosyl-L-methionine-dependent methyltransferase responsible for the addition of the methyl group in the formation of N6-methyl-N6-threonylcarbamoyladenosine at position 37 (m(6)t(6)A37) of the tRNA anticodon loop of tRNA(Ser)(GCU). The methyl group of m(6)t(6)A37 may improve the efficiency of the tRNA decoding ability. The polypeptide is tRNA (adenine(37)-N6)-methyltransferase (Homo sapiens (Human)).